Consider the following 375-residue polypeptide: 23S rRNA (uracil(747)-C(5))-methyltransferase RlmC (375 aa).

4 residues coordinate [4Fe-4S] cluster: C3, C11, C14, and C87. 4 residues coordinate S-adenosyl-L-methionine: Q212, F241, E262, and N307. Catalysis depends on C334, which acts as the Nucleophile.

This sequence belongs to the class I-like SAM-binding methyltransferase superfamily. RNA M5U methyltransferase family. RlmC subfamily.

It catalyses the reaction uridine(747) in 23S rRNA + S-adenosyl-L-methionine = 5-methyluridine(747) in 23S rRNA + S-adenosyl-L-homocysteine + H(+). Functionally, catalyzes the formation of 5-methyl-uridine at position 747 (m5U747) in 23S rRNA. The chain is 23S rRNA (uracil(747)-C(5))-methyltransferase RlmC from Shigella sonnei (strain Ss046).